The chain runs to 1402 residues: Defective in tip formation protein A (1402 aa).

Disordered stretches follow at residues 1-20 (MKDI…PPQI), 37-94 (NVTT…PQIV), 109-133 (NTPS…DNDI), and 210-292 (KQSS…RRLK). Tandem repeats lie at residues 12–18 (TTTVAPP) and 40–46 (TTTVQPP). A 4 X 7 AA repeat of T-T-T-[IV]-[AQ]-P-P region spans residues 12-92 (TTTVAPPQIN…TTTTTVQPPQ (81 aa)). The span at 38–47 (VTTTTVQPPQ) shows a compositional bias: low complexity. Pro residues predominate over residues 48-58 (IVSPPSPPSPP). The span at 59-94 (QTTTIAPPTILPTTKTTTTTTTTTTTTTTVQPPQIV) shows a compositional bias: low complexity. Tandem repeats lie at residues 60–66 (TTTIAPP) and 86–92 (TTVQPPQ). Positions 210-234 (KQSSQSQLQQQLSSQSLQQIQQKSK) are enriched in low complexity. A compositionally biased stretch (pro residues) spans 235–253 (QPPPQQQQQQQPPPPPIPL). A compositionally biased stretch (low complexity) spans 254–279 (LPQIHQQLKPKQQQEQQQQQEQQQQQ). Positions 350–383 (QRIKSFIENHKKKKQKYREYQSEKNQQQKSNSKK) form a coiled coil. 2 disordered regions span residues 429-453 (DQQQ…SPMT) and 712-745 (NNNN…NLSN). Low complexity predominate over residues 430–453 (QQQQQQQQQQSTMTTTSSSSSPMT).

It is found in the cell surface. Its function is as follows. Required for correct organization of the actin cytoskeleton and cytokinesis. Also required for apical sorting of prestalk cells, a prerequisite for formation of the tip at the mound stage and subsequent formation of the fruiting body. May be required for cell adhesion. The protein is Defective in tip formation protein A (dtfA) of Dictyostelium discoideum (Social amoeba).